A 526-amino-acid polypeptide reads, in one-letter code: Lysine--tRNA ligase (526 aa).

Residues glutamate 431 and glutamate 438 each coordinate Mg(2+).

It belongs to the class-II aminoacyl-tRNA synthetase family. Homodimer. Mg(2+) serves as cofactor.

Its subcellular location is the cytoplasm. It catalyses the reaction tRNA(Lys) + L-lysine + ATP = L-lysyl-tRNA(Lys) + AMP + diphosphate. This Chlamydia trachomatis serovar D (strain ATCC VR-885 / DSM 19411 / UW-3/Cx) protein is Lysine--tRNA ligase (lysS).